The sequence spans 218 residues: LOB domain-containing protein 29 (218 aa).

Residues 10 to 112 form the LOB domain; the sequence is SPCGACKFLR…AELEILKQQA (103 aa).

It belongs to the LOB domain-containing protein family. In terms of tissue distribution, expressed in roots.

In terms of biological role, involved in lateral root formation. Regulated by the transcriptional activators ARF7 and ARF19. The protein is LOB domain-containing protein 29 (LBD29) of Arabidopsis thaliana (Mouse-ear cress).